Consider the following 91-residue polypeptide: Sec-independent protein translocase protein TatA (91 aa).

A helical membrane pass occupies residues 1 to 21; that stretch reads MGAMSPWHWAIVALVVIILFG. The segment at 44-91 is disordered; it reads KEMQNDNSTPAPTAQQSAPAELPVADTTTAPVTPPAPVQPQHTEPKSA. Residues 51–74 are compositionally biased toward low complexity; it reads STPAPTAQQSAPAELPVADTTTAP.

This sequence belongs to the TatA/E family. The Tat system comprises two distinct complexes: a TatABC complex, containing multiple copies of TatA, TatB and TatC subunits, and a separate TatA complex, containing only TatA subunits. Substrates initially bind to the TatABC complex, which probably triggers association of the separate TatA complex to form the active translocon.

The protein resides in the cell membrane. Its function is as follows. Part of the twin-arginine translocation (Tat) system that transports large folded proteins containing a characteristic twin-arginine motif in their signal peptide across membranes. TatA could form the protein-conducting channel of the Tat system. This Rhodococcus jostii (strain RHA1) protein is Sec-independent protein translocase protein TatA.